A 617-amino-acid polypeptide reads, in one-letter code: Glutamine--fructose-6-phosphate aminotransferase [isomerizing] (617 aa).

Cys2 functions as the Nucleophile; for GATase activity in the catalytic mechanism. The Glutamine amidotransferase type-2 domain occupies 2 to 222 (CGIIGLAFAE…DGEFGWISPE (221 aa)). 2 SIS domains span residues 293 to 432 (AAGL…EAGR) and 466 to 607 (AASL…PDKP). Lys612 (for Fru-6P isomerization activity) is an active-site residue.

As to quaternary structure, homodimer.

It localises to the cytoplasm. The enzyme catalyses D-fructose 6-phosphate + L-glutamine = D-glucosamine 6-phosphate + L-glutamate. Catalyzes the first step in hexosamine metabolism, converting fructose-6P into glucosamine-6P using glutamine as a nitrogen source. The protein is Glutamine--fructose-6-phosphate aminotransferase [isomerizing] of Aeropyrum pernix (strain ATCC 700893 / DSM 11879 / JCM 9820 / NBRC 100138 / K1).